Consider the following 469-residue polypeptide: MSAPRTLYDKIWDDHVVDQQEDGTCLLYIDRHLVHEVTSPQAFEGLRMAGRKVRHPEKTLAVVDHNVPTSPDRINGIKNEESRIQVEALAKNAADFNVEYYSERDRRQGVVHIVGPEQGFTLPGMTIVCGDSHTSTHGAFGSLAHGIGTSEVEHVLATQTLIQKKAKNMLVRVEGELAPGVTAKDITLAIIGEIGTAGGTGYVIEYAGSAIRSLSMEGRMTVCNMSIEGGARAGLIAPDETTFAYVQDKPRAPKGEALEQAISYWKTLHSDEGAHFDKIVELDAAKISPVVSWGSSPEDVVFVTDIVPNPDEIKDETKRASKWRALDYMGLKPGTKMTDIKIDRVFIGSCTNGRIEDLRDAARMAAGKKVAAGVNAMIVPGSGLVKEQAEAEGLDKIFIEAGFDWREPGCSMCLAMNDDRLKPGERCASTSNRNFEGRQGFKGRTHLVSPAMAAAAAIAGHFVDIREWN.

The [4Fe-4S] cluster site is built by cysteine 350, cysteine 410, and cysteine 413.

This sequence belongs to the aconitase/IPM isomerase family. LeuC type 1 subfamily. In terms of assembly, heterodimer of LeuC and LeuD. Requires [4Fe-4S] cluster as cofactor.

The catalysed reaction is (2R,3S)-3-isopropylmalate = (2S)-2-isopropylmalate. Its pathway is amino-acid biosynthesis; L-leucine biosynthesis; L-leucine from 3-methyl-2-oxobutanoate: step 2/4. Catalyzes the isomerization between 2-isopropylmalate and 3-isopropylmalate, via the formation of 2-isopropylmaleate. The polypeptide is 3-isopropylmalate dehydratase large subunit (Brucella anthropi (strain ATCC 49188 / DSM 6882 / CCUG 24695 / JCM 21032 / LMG 3331 / NBRC 15819 / NCTC 12168 / Alc 37) (Ochrobactrum anthropi)).